Here is a 165-residue protein sequence, read N- to C-terminus: 16S rRNA aminocarboxypropyltransferase (165 aa).

4 residues coordinate S-adenosyl-L-methionine: Thr17, Leu62, Leu83, and Thr102.

Belongs to the TDD superfamily. TSR3 family.

Its subcellular location is the cytoplasm. The catalysed reaction is an N(1)-methylpseudouridine in rRNA + S-adenosyl-L-methionine = N(1)-methyl-N(3)-[(3S)-3-amino-3-carboxypropyl]pseudouridine in rRNA + S-methyl-5'-thioadenosine + H(+). In terms of biological role, aminocarboxypropyltransferase that catalyzes the aminocarboxypropyl transfer on pseudouridine corresponding to position 914 in M.jannaschii 16S rRNA. It constitutes the last step in biosynthesis of the hypermodified N1-methyl-N3-(3-amino-3-carboxypropyl) pseudouridine (m1acp3-Psi). In Halobacterium salinarum (strain ATCC 700922 / JCM 11081 / NRC-1) (Halobacterium halobium), this protein is 16S rRNA aminocarboxypropyltransferase.